Here is a 181-residue protein sequence, read N- to C-terminus: MSRIGKRPIALPAKVEVQIEGQQISVKGPKGELSRSLPPLIAVHQEAQTLKVSRVNESRPARQLHGLCRTLVANMVDGVSRGFERRLELVGVGYRASTQGNKLILNVGYSHPVEIPFPPGIQIAVEGNNVIVVSGIDKELVGNTAARIRAVRPPEPYKGKGIRYVGEQVRRKAGKSGKAKK.

The protein belongs to the universal ribosomal protein uL6 family. In terms of assembly, part of the 50S ribosomal subunit.

This protein binds to the 23S rRNA, and is important in its secondary structure. It is located near the subunit interface in the base of the L7/L12 stalk, and near the tRNA binding site of the peptidyltransferase center. This Synechococcus sp. (strain JA-3-3Ab) (Cyanobacteria bacterium Yellowstone A-Prime) protein is Large ribosomal subunit protein uL6.